A 599-amino-acid polypeptide reads, in one-letter code: DNA-directed RNA polymerase III subunit RPC3 (599 aa).

The interval 350–375 (PKKRSASNGDDERPTKKIKTEDSDDI) is disordered. The segment covering 359-370 (DDERPTKKIKTE) has biased composition (basic and acidic residues). A leucine-zipper region spans residues 528–549 (LIFSMAEILSNIQAFREDHKIL).

This sequence belongs to the RNA polymerase beta chain family. In terms of assembly, component of the RNA polymerase III (Pol III) complex consisting of 17 subunits.

The protein localises to the nucleus. Its function is as follows. DNA-dependent RNA polymerase catalyzes the transcription of DNA into RNA using the four ribonucleoside triphosphates as substrates. Specific core component of RNA polymerase III which synthesizes small RNAs, such as 5S rRNA and tRNAs. The protein is DNA-directed RNA polymerase III subunit RPC3 (RPC82) of Scheffersomyces stipitis (strain ATCC 58785 / CBS 6054 / NBRC 10063 / NRRL Y-11545) (Yeast).